The chain runs to 205 residues: Recombination protein RecR (205 aa).

Residues 58 to 73 (CKKCHTISDHELCAIC) form a C4-type zinc finger. Residues 81–177 (RVVCIVEDIR…KISTIARGIP (97 aa)) enclose the Toprim domain.

Belongs to the RecR family.

Functionally, may play a role in DNA repair. It seems to be involved in an RecBC-independent recombinational process of DNA repair. It may act with RecF and RecO. This Cytophaga hutchinsonii (strain ATCC 33406 / DSM 1761 / CIP 103989 / NBRC 15051 / NCIMB 9469 / D465) protein is Recombination protein RecR.